The sequence spans 254 residues: MVIANSNIIFVAGLGGIGLDTSREIVKSGPKNLVLLDRIDNPAAIAELKALNPKVTVTFYPYDVTVPLAETKKLLKTIFDKLKTVDLLINGAGILDDNQIERTIAVNFTGLVNTTTAILDFWDKRKGGPVGVVANICSVTGFNSIYQVPVYSASKAAALSFTTSIAKLAHITGVTAYSINPGITKTVLEHSFNSWLNVEPRVAELLLEHPTQTTLQCAQNFVKAIEANQNGAIWKLDLGRLDAIEWTKRWDSGI.

An NAD(+)-binding site is contributed by 10–33; the sequence is FVAGLGGIGLDTSREIVKSGPKNL. Position 138 (serine 138) interacts with substrate. Tyrosine 151 serves as the catalytic Proton acceptor.

The protein belongs to the short-chain dehydrogenases/reductases (SDR) family. Homodimer.

The catalysed reaction is a primary alcohol + NAD(+) = an aldehyde + NADH + H(+). It catalyses the reaction a secondary alcohol + NAD(+) = a ketone + NADH + H(+). This Drosophila hawaiiensis (Fruit fly) protein is Alcohol dehydrogenase (Adh).